The sequence spans 330 residues: Spondin-2 (330 aa).

The signal sequence occupies residues 1-25 (MENVSFSLDRTLWVFLLAMLGSTAG). Residues 30–220 (GESVCTARPL…EITASSPSHP (191 aa)) enclose the Spondin domain. The cysteines at positions 34 and 170 are disulfide-linked. Residue Glu-140 participates in a divalent metal cation binding. Positions 159, 187, and 191 each coordinate Ca(2+). Positions 276–330 (DCEVSLWSSWGLCGGPCGKLGAKSRTRYVRVQPANNGTPCPELEEEAECAPDNCV) constitute a TSP type-1 domain. Residue Trp-282 is glycosylated (C-linked (Man) tryptophan).

Monomer. Interacts with integrin. Abundantly expressed in the developing hippocampus.

Its subcellular location is the secreted. The protein localises to the extracellular space. It is found in the extracellular matrix. In terms of biological role, cell adhesion protein that promotes adhesion and outgrowth of hippocampal embryonic neurons. Binds directly to bacteria and their components and functions as an opsonin for macrophage phagocytosis of bacteria. Essential in the initiation of the innate immune response and represents a unique pattern-recognition molecule in the ECM for microbial pathogens. The protein is Spondin-2 (Spon2) of Rattus norvegicus (Rat).